The primary structure comprises 269 residues: 5'-nucleotidase SurE (269 aa).

Residues D8, D9, S39, and N92 each coordinate a divalent metal cation.

The protein belongs to the SurE nucleotidase family. The cofactor is a divalent metal cation.

The protein localises to the cytoplasm. The enzyme catalyses a ribonucleoside 5'-phosphate + H2O = a ribonucleoside + phosphate. Functionally, nucleotidase that shows phosphatase activity on nucleoside 5'-monophosphates. This chain is 5'-nucleotidase SurE, found in Psychrobacter cryohalolentis (strain ATCC BAA-1226 / DSM 17306 / VKM B-2378 / K5).